A 952-amino-acid chain; its full sequence is Protocadherin-20 (952 aa).

The N-terminal stretch at 1 to 60 is a signal peptide; it reads MRGRGNARSLLVQAVSLRPATWHPCLDMGHLHRPSSRTSHRNLPHVFLLFLFVGPFNCLA. Residues 61–891 are Extracellular-facing; that stretch reads SYSRATELLY…VESMSCMPTL (831 aa). 6 Cadherin domains span residues 64–210, 211–321, 322–536, 537–640, 641–743, and 747–864; these read RATE…APQF, PISE…CPLF, IDSQ…APVF, LQPL…SPRF, INKD…PPLV, and QSNM…EPEI. A glycan (N-linked (GlcNAc...) asparagine) is linked at Asn135. 2 N-linked (GlcNAc...) asparagine glycosylation sites follow: Asn327 and Asn333. N-linked (GlcNAc...) asparagine glycans are attached at residues Asn681, Asn749, Asn804, Asn845, and Asn850. Residues 892–912 traverse the membrane as a helical segment; it reads VALSVISLGSITLVTGMGIYI. At 913-952 the chain is on the cytoplasmic side; that stretch reads CLRKGKKHHREDDNLEVQIPLKGKIDLCMRERKPVDISNI.

The protein localises to the cell membrane. Functionally, potential calcium-dependent cell-adhesion protein. In Mus musculus (Mouse), this protein is Protocadherin-20 (Pcdh20).